We begin with the raw amino-acid sequence, 429 residues long: Histidine--tRNA ligase (429 aa).

This sequence belongs to the class-II aminoacyl-tRNA synthetase family. As to quaternary structure, homodimer.

The protein localises to the cytoplasm. It catalyses the reaction tRNA(His) + L-histidine + ATP = L-histidyl-tRNA(His) + AMP + diphosphate + H(+). This is Histidine--tRNA ligase from Stutzerimonas stutzeri (strain A1501) (Pseudomonas stutzeri).